Here is a 68-residue protein sequence, read N- to C-terminus: UPF0434 protein BTH_I0741 (68 aa).

Belongs to the UPF0434 family.

The chain is UPF0434 protein BTH_I0741 from Burkholderia thailandensis (strain ATCC 700388 / DSM 13276 / CCUG 48851 / CIP 106301 / E264).